The primary structure comprises 2537 residues: Centrosomal protein of 192 kDa (2537 aa).

2 disordered regions span residues 69–138 and 288–308; these read FSVP…ATES and HSSETTHKESEESQVICLPGT. A compositionally biased stretch (low complexity) spans 70–81; that stretch reads SVPSGSSPGSQS. Positions 106–122 are enriched in polar residues; that stretch reads VESQRLSNALSKQSALQ. Residues 288–298 are compositionally biased toward basic and acidic residues; sequence HSSETTHKESE. The residue at position 812 (S812) is a Phosphoserine. Disordered regions lie at residues 950 to 1021, 1043 to 1064, 1101 to 1158, and 1182 to 1234; these read VTFE…QQQP, VSEPESSYPTTATDDALEDRKS, KGTL…WTSN, and ATSH…STVH. Positions 960–970 are enriched in polar residues; that stretch reads PKNSDLKNTSP. The segment covering 984 to 1005 has biased composition (low complexity); that stretch reads FRPSTSPLSHSSPSEISGTSSS. Polar residues-rich tracts occupy residues 1046 to 1055 and 1103 to 1112; these read PESSYPTTAT and TLSSIIQNNS. Over residues 1128-1141 the composition is skewed to basic and acidic residues; the sequence is EYVKPDFRWSKDPS. Polar residues predominate over residues 1142–1158; it reads SKSGNLLETSEVGWTSN. The segment covering 1195–1207 has biased composition (basic and acidic residues); it reads EDQRISPKDKSTA. A compositionally biased stretch (polar residues) spans 1213–1234; it reads GQVSHQTTSENQCTPIPSSTVH. S1755, S2098, and S2110 each carry phosphoserine. P2313 is subject to Hydroxyproline.

Interacts with SHBG. Interacts with PLK4; this interaction mediates the formation of a ternary complex composed by PLK4, TENT5C and CEP192. Interacts with CCDC66. In terms of processing, hydroxylation by PHD1/EGLN2 at Pro-2313 promotes ubiquitination. Post-translationally, ubiquitinated by a SCF(SKP2) complex following proline hydroxylation. Ubiquitinated in a FBXL13-dependent manner, leading to proteasomal degradation.

It localises to the cytoplasm. The protein resides in the cytoskeleton. The protein localises to the microtubule organizing center. It is found in the centrosome. Its subcellular location is the centriole. In terms of biological role, required for mitotic centrosome maturation and bipolar spindle assembly. Appears to be a major regulator of pericentriolar material (PCM) recruitment, centrosome maturation, and centriole duplication. Centrosome-specific activating scaffold for AURKA and PLK1. The sequence is that of Centrosomal protein of 192 kDa from Homo sapiens (Human).